We begin with the raw amino-acid sequence, 1791 residues long: MGTRDSNNRTFSEIVGLIKSWLPWRSEPATVSRDFWMPDQSCRVCYECDCQFTLINRRHHCRHCGRVFCGKCTANSIPFAPSDLRTPREDWERIRVCNYCFRQWEQGDGGPHVSNITELSTSPSETSLLSSKTSTTANSSSFALGSMPGLIGLNQRVHHGSDVSLHGVSSMETSVTKQGKETSRRSSFIATDVEDPSRFALNSIRSDDEYDEYGAYQTDIETSHSPRANEYYGPMEYNGMGIDDVPCKHLGGETADQKSLSGSPLIHQCLESLIREGSEQFQKKSEHDGRDECEASSPADISDDQVVEPVDFENNGLLWVPPEPENEEDERESALFDEEDNEGDASGEWGYLRPSTSFGSGEYRGEDRTTEEHKKAMKNVVDGHFRALLAQLLQVENISVSDEEGKESWLEIITSLSWEAANLLKPDMSKSGGMDPGGYVKVKCLASGFRHDSMVVKGVVCKKNVVNRRMSTKIEKARLLILGGGLEYQRVSNQLSSFDTLLQQEKDHLKMAVAKIHAERPNILLVEKSVSRFAQEYLLAKDISLVLNIKRPLLDRIARCTGAQIIPSVDHLSSQKLGYCENFRVDRYPEEHGSTGQVGKKVVKTLMYFEHCPKPLGFTILLRGANEDELKKVKHVVQYGVFAAYHLALETSFLADEGASPELPLNSPITVALPDKSTSIERSISTVPGFTVSTYEKSPTMLSCAEPQRANSVPVSELLSTTTNLSIQKDIPPIPYGSGWQAREINPSFVFSRHNISLNLPDRVIESRNSDLSGRSVPVDTPADKSNPIVVADETTNNSLHLSGQGFVRKSSQIGTSIMVENQDNGSELTIAQQQNNEKPKETQSQKEEFPPSPSDHQSILVSLSSRSVWKGTVCERSHLFRIKYYGSFDKPLGRFLRDHLFDQSYRCRSCEMPSEAHVHCYTHRQGSLTISVKKLQDYLLPGEKEGKIWMWHRCLRCPRLNGFPPATLRVVMSDAAWGLSFGKFLELSFSNHAAASRVACCGHSLHRDCLRFYGFGNMVACFRYATIDVHSVYLPPSILSFNYENQDWIQRETDEVIERAELLFSEVLNAISQIAEKGFRRRIGELEEVLQKEKAEFEENMQKILHREVNEGQPLVDILELYRIHRQLLFQSYMWDHRLINASTLHKLENSDDTKREENEKPPLAKSQTLPEMNAGTNSLLTGSEVNLNPDGDSTGDTGSLNNVQKEADTNSDLYQEKDDGGEVSPSKTLPDTSYPLENKVDVRRTQSDGQIVMKNLSATLDAAWIGERQTSVEIPTNNKVSLPPSTMSNSSTFPPISEGLMPIDLPEQQNEFKVAYPVSPALPSKNYENSEDSVSWLSVPFLNFYRSINKNFLLSSQKLDTFGEHSPIYISSFREAELQGGPRLLLPVGLNDIVVPVYDDEPTSMIAYALMSPEYQRQTSAEGESLVSYPSELNIPRPVDDTIFDPSRSNGSVDESILSISSSRSTSLLDPLSYTKALHARVSYGEDGTLGKVKYTVTCYYAKRFEALRGICLPSELEYIRSLSRCKKWGAQGGKSNVFFAKTLDDRFIIKQVTKTELESFIKFAPAYFKYLSESISTKSPTCLAKILGIYQVATKQLKSGKETKMDVLIMENLLFGRTVKRLYDLKGSSRARYNPDSSGSNKVLLDQNLIEAMPTSPIFVGNKAKRLLERAVWNDTAFLALGDVMDYSLLVGVDEEKNELVLGIIDFLRQYTWDKHLESWVKFTGILGGPKNEAPTVISPKQYKRRFRKAMTTYFLMVPDQWSPPNVVANNSKSDQPEETSQAGTQAE.

An FYVE-type zinc finger spans residues 39 to 105; it reads DQSCRVCYEC…VCNYCFRQWE (67 aa). Zn(2+)-binding residues include cysteine 45, cysteine 48, cysteine 61, cysteine 64, cysteine 69, cysteine 72, cysteine 97, and cysteine 100. Disordered stretches follow at residues 166 to 186, 279 to 370, 770 to 790, and 834 to 859; these read HGVS…SRRS, EQFQ…DRTT, SDLS…NPIV, and QQNN…DHQS. A compositionally biased stretch (basic and acidic residues) spans 279–293; that stretch reads EQFQKKSEHDGRDEC. Positions 324–345 are enriched in acidic residues; that stretch reads PENEEDERESALFDEEDNEGDA. Positions 838–850 are enriched in basic and acidic residues; that stretch reads EKPKETQSQKEEF. Residues 1077–1111 are a coiled coil; that stretch reads EKGFRRRIGELEEVLQKEKAEFEENMQKILHREVN. The span at 1151-1164 shows a compositional bias: basic and acidic residues; sequence NSDDTKREENEKPP. The disordered stretch occupies residues 1151–1242; the sequence is NSDDTKREEN…DTSYPLENKV (92 aa). Polar residues-rich tracts occupy residues 1167-1188 and 1196-1206; these read KSQT…SEVN and TGDTGSLNNVQ. The region spanning 1433–1758 is the PIPK domain; sequence SELNIPRPVD…RFRKAMTTYF (326 aa). The segment at 1769-1791 is disordered; the sequence is NVVANNSKSDQPEETSQAGTQAE. The segment covering 1771 to 1791 has biased composition (polar residues); it reads VANNSKSDQPEETSQAGTQAE.

As to quaternary structure, component of the PI(3,5)P2 regulatory complex at least composed of ATG18, SAC/FIG4, FAB1 and VAC14. Mg(2+) serves as cofactor. The cofactor is Mn(2+). As to expression, ubiquitous with highest expression levels in the root hair zone, pollen, and stamens.

Its subcellular location is the endosome membrane. The enzyme catalyses a 1,2-diacyl-sn-glycero-3-phospho-(1D-myo-inositol-3-phosphate) + ATP = a 1,2-diacyl-sn-glycero-3-phospho-(1D-myo-inositol-3,5-bisphosphate) + ADP + H(+). In terms of biological role, the PI(3,5)P2 regulatory complex regulates both the synthesis and turnover of phosphatidylinositol 3,5-bisphosphate (PtdIns(3,5)P2). Catalyzes the phosphorylation of phosphatidylinositol 3-phosphate on the fifth hydroxyl of the myo-inositol ring, to form phosphatidylinositol 3,5-bisphosphate. Plays an important role in maintenance of endomembrane homeostasis including endocytosis, vacuole formation, and vacuolar acidification processes. Required for development of viable pollen. Might mediate recycling of auxin transporters. This Arabidopsis thaliana (Mouse-ear cress) protein is 1-phosphatidylinositol-3-phosphate 5-kinase FAB1B (FAB1B).